The sequence spans 297 residues: Probable esterase afoC (297 aa).

The active-site Charge relay system is S136. Over residues 204 to 217 the composition is skewed to low complexity; the sequence is ASSSASASVSGSES. The segment at 204-226 is disordered; that stretch reads ASSSASASVSGSESAGEEEEDGH. Active-site charge relay system residues include D240 and H267.

It belongs to the LovG family.

Functionally, probable esterase; part of the gene cluster that mediates the biosynthesis of asperfuranone, a probable antitumor agent. The polyketide synthase afoG is responsible for producing the 3,5-dimethyloctadienone moiety from acetyl-CoA, three malonyl-CoA, and two S-adenosyl methionines (SAM). The 3,5-dimethyloctadienone moiety is then loaded onto the SAT domain of afoE and extended with four malonyl-CoA and one SAM, which leads to the formation of 2,4-dihydroxy-6-(5,7-dimethyl-2-oxo-trans-3-trans-5-nonadienyl)-3-methylbenzaldehyde (compound 2) after reductive release and aldol condensation. AfoD is the next enzyme in the biosynthesis sequence and hydroxylates the side chain at the benzylic position of compound 2. After benzylic hydroxylation, a furan ring is formed after five-member ring hemiacetal formation and water elimination. AfoF and afoC are proposed to oxidize the R-diketone proton and to reduce the unconjugated carbonyl group, respectively, to generate asperfuranone. Since no intermediates could be isolated from afoF and afoC deletants, the sequence of these two enzymes is not fully understood. Moreover, since afoC deletant still produces a small amount of asperfuranone, other endogenous oxidoreductases might catalyze the same reaction with much less efficiency. This is Probable esterase afoC from Emericella nidulans (strain FGSC A4 / ATCC 38163 / CBS 112.46 / NRRL 194 / M139) (Aspergillus nidulans).